The following is a 257-amino-acid chain: Zinc import ATP-binding protein ZnuC (257 aa).

The 216-residue stretch at 6 to 221 (IRLEQVGVSF…PAFVELFGQN (216 aa)) folds into the ABC transporter domain. 38–45 (GPNGAGKT) serves as a coordination point for ATP.

The protein belongs to the ABC transporter superfamily. Zinc importer (TC 3.A.1.15.5) family. In terms of assembly, the complex is composed of two ATP-binding proteins (ZnuC), two transmembrane proteins (ZnuB) and a solute-binding protein (ZnuA).

It is found in the cell inner membrane. It carries out the reaction Zn(2+)(out) + ATP(in) + H2O(in) = Zn(2+)(in) + ADP(in) + phosphate(in) + H(+)(in). Its function is as follows. Part of the ABC transporter complex ZnuABC involved in zinc import. Responsible for energy coupling to the transport system. This chain is Zinc import ATP-binding protein ZnuC, found in Pseudomonas entomophila (strain L48).